The primary structure comprises 288 residues: 4-diphosphocytidyl-2-C-methyl-D-erythritol kinase (288 aa).

The active site involves lysine 11. 95-105 serves as a coordination point for ATP; the sequence is PVAAGMAGGSS. The active site involves aspartate 137.

This sequence belongs to the GHMP kinase family. IspE subfamily.

The enzyme catalyses 4-CDP-2-C-methyl-D-erythritol + ATP = 4-CDP-2-C-methyl-D-erythritol 2-phosphate + ADP + H(+). It participates in isoprenoid biosynthesis; isopentenyl diphosphate biosynthesis via DXP pathway; isopentenyl diphosphate from 1-deoxy-D-xylulose 5-phosphate: step 3/6. Its function is as follows. Catalyzes the phosphorylation of the position 2 hydroxy group of 4-diphosphocytidyl-2C-methyl-D-erythritol. In Lachnospira eligens (strain ATCC 27750 / DSM 3376 / VPI C15-48 / C15-B4) (Eubacterium eligens), this protein is 4-diphosphocytidyl-2-C-methyl-D-erythritol kinase.